Reading from the N-terminus, the 429-residue chain is Cytochrome P450 BJ-3 (429 aa).

Residue C376 coordinates heme.

The protein belongs to the cytochrome P450 family. Heme serves as cofactor.

Cytochromes P450 are a group of heme-thiolate monooxygenases. They oxidize a variety of structurally unrelated compounds, including steroids, fatty acids, and xenobiotics. The protein is Cytochrome P450 BJ-3 (cyp114) of Bradyrhizobium diazoefficiens (strain JCM 10833 / BCRC 13528 / IAM 13628 / NBRC 14792 / USDA 110).